A 205-amino-acid polypeptide reads, in one-letter code: Guanylate kinase (205 aa).

One can recognise a Guanylate kinase-like domain in the interval 5-183; sequence GTLYTVSAPS…ALTEFRSIVV (179 aa). 12 to 19 contacts ATP; that stretch reads APSGAGKT.

The protein belongs to the guanylate kinase family.

Its subcellular location is the cytoplasm. The catalysed reaction is GMP + ATP = GDP + ADP. Essential for recycling GMP and indirectly, cGMP. This Saccharophagus degradans (strain 2-40 / ATCC 43961 / DSM 17024) protein is Guanylate kinase.